A 2618-amino-acid chain; its full sequence is Mediator of RNA polymerase II transcription subunit 13 (2618 aa).

Low complexity-rich tracts occupy residues 232–255 (FAAASSPPGSNGSAASAGGAVPNP), 509–519 (TPASGTGSLSA), and 532–543 (DSKQLVQQQIQQ). Disordered stretches follow at residues 232 to 279 (FAAA…AAPP), 509 to 543 (TPASGTGSLSADGDENEQNKPPQDSKQLVQQQIQQ), 569 to 731 (GNTP…SGGP), 916 to 957 (LNIK…AEGL), 970 to 995 (TSSNDECSSVQIHTPPDSNNPSNGGC), 1036 to 1055 (TKMFPTPPSHEQQHPNSSPC), 1268 to 1384 (PRTP…TGVV), 1521 to 1557 (ASASMPGAGSGHGHGPNGGSNSSSCTPPSSNPHITGY), 1614 to 1633 (SRKNQNKQGPGETSSALDKI), and 1985 to 2060 (KTLL…GETK). Thr-571 and Thr-575 each carry phosphothreonine. 3 stretches are compositionally biased toward polar residues: residues 581 to 590 (STYSRNSLGG), 634 to 643 (APTSVSNLQQ), and 669 to 681 (SITASPYVHQTPS). Residues 692 to 706 (AGGGPAGGQGLGTGP) are compositionally biased toward gly residues. The segment covering 711 to 723 (AQQPATPTAATSA) has biased composition (low complexity). A compositionally biased stretch (gly residues) spans 939–949 (NSSGGGSGSGG). The span at 1272 to 1295 (LTPSTVPQPLSSGGSQYLLNQLNC) shows a compositional bias: polar residues. Gly residues-rich tracts occupy residues 1375 to 1384 (GLGGGATGVV) and 1528 to 1538 (AGSGHGHGPNG). A compositionally biased stretch (low complexity) spans 1539–1553 (GSNSSSCTPPSSNPH). A compositionally biased stretch (polar residues) spans 1614–1629 (SRKNQNKQGPGETSSA). The segment covering 1993 to 2014 (GSGNSHSKGGSSCSSNSSSVSG) has biased composition (low complexity). Phosphoserine occurs at positions 2472 and 2475.

The protein belongs to the Mediator complex subunit 13 family. As to quaternary structure, component of the Cdk8 module of the Mediator complex, composed of CycC, Cdk8, kto and skd.

The protein resides in the nucleus. In terms of biological role, component of the Mediator complex, a coactivator involved in the regulated transcription of nearly all RNA polymerase II-dependent genes. Mediator functions as a bridge to convey information from gene-specific regulatory proteins to the basal RNA polymerase II transcription machinery. Mediator is recruited to promoters by direct interactions with regulatory proteins and serves as a scaffold for the assembly of a functional preinitiation complex with RNA polymerase II and the general transcription factors. Required for leg and eye development and macrochaete specification or differentiation. Negatively regulates sex comb development. Required for activated transcription of the MtnB and MtnD genes. The sequence is that of Mediator of RNA polymerase II transcription subunit 13 (skd) from Drosophila melanogaster (Fruit fly).